The following is a 1069-amino-acid chain: Degenerin-like protein del-10 (1069 aa).

The Cytoplasmic portion of the chain corresponds to 1–95 (MVRMAERLAE…LNAASPVTRG (95 aa)). The chain crosses the membrane as a helical span at residues 96 to 116 (LWCMIIIAFVILVLVQCYSQI). Residues 117 to 830 (KLYISEPVAT…FWSLACDIGG (714 aa)) are Extracellular-facing. 7 N-linked (GlcNAc...) asparagine glycosylation sites follow: N216, N290, N374, N454, N539, N545, and N584. The helical transmembrane segment at 831-851 (ALGLFLGASLLTIIEIVYLCI) threads the bilayer. The Cytoplasmic portion of the chain corresponds to 852–1069 (QYGLCGKRAR…EEDDDKHSYV (218 aa)). Disordered regions lie at residues 898-948 (KKSQ…TLTP) and 960-1069 (RNSQ…HSYV). Residues 915-928 (GDKFRSRASSEESK) are compositionally biased toward basic and acidic residues. Residues 938-948 (NDPSGNSTLTP) are compositionally biased toward polar residues. Residues 967 to 978 (YHDDHHPEDHYY) are compositionally biased toward basic and acidic residues.

This sequence belongs to the amiloride-sensitive sodium channel (TC 1.A.6) family.

The protein localises to the membrane. The chain is Degenerin-like protein del-10 from Caenorhabditis elegans.